Consider the following 312-residue polypeptide: Malate dehydrogenase (312 aa).

Residues 7-13 (GAAGGIG) and aspartate 34 contribute to the NAD(+) site. Substrate-binding residues include arginine 81 and arginine 87. NAD(+)-binding positions include asparagine 94 and 117-119 (ITN). Positions 119 and 153 each coordinate substrate. Histidine 177 acts as the Proton acceptor in catalysis. Residue methionine 227 participates in NAD(+) binding.

The protein belongs to the LDH/MDH superfamily. MDH type 1 family. In terms of assembly, homodimer.

It carries out the reaction (S)-malate + NAD(+) = oxaloacetate + NADH + H(+). Its function is as follows. Catalyzes the reversible oxidation of malate to oxaloacetate. The polypeptide is Malate dehydrogenase (Enterobacter sp. (strain 638)).